Reading from the N-terminus, the 406-residue chain is Argininosuccinate synthase (406 aa).

8–16 is a binding site for ATP; that stretch reads AYSGGLDTS. An L-citrulline-binding site is contributed by Tyr86. Position 116 (Gly116) interacts with ATP. Positions 118, 122, and 123 each coordinate L-aspartate. Position 122 (Asn122) interacts with L-citrulline. Arg126, Ser174, Ser183, Glu259, and Tyr271 together coordinate L-citrulline.

This sequence belongs to the argininosuccinate synthase family. Type 1 subfamily. As to quaternary structure, homotetramer.

The protein localises to the cytoplasm. The enzyme catalyses L-citrulline + L-aspartate + ATP = 2-(N(omega)-L-arginino)succinate + AMP + diphosphate + H(+). It participates in amino-acid biosynthesis; L-arginine biosynthesis; L-arginine from L-ornithine and carbamoyl phosphate: step 2/3. In Oenococcus oeni (strain ATCC BAA-331 / PSU-1), this protein is Argininosuccinate synthase.